A 582-amino-acid polypeptide reads, in one-letter code: Multicopper oxidase LPR1 homolog 1 (582 aa).

Positions 1-20 are cleaved as a signal peptide; that stretch reads MRAKVELAVLLLVLVGVAAG. Residues His-150, His-152, His-198, and His-200 each coordinate Cu cation. N-linked (GlcNAc...) asparagine glycosylation is found at Asn-256, Asn-300, and Asn-308. Residues 285-354 form the Plastocyanin-like domain; that stretch reads PFLAVARRRY…DVVVDFSQST (70 aa). His-467, His-470, and His-472 together coordinate Cu cation. Asn-504 carries an N-linked (GlcNAc...) asparagine glycan. The Cu cation site is built by His-563, Cys-564, His-565, His-569, and Met-574.

Belongs to the multicopper oxidase family. It depends on Cu cation as a cofactor. In terms of tissue distribution, highly expressed in roots, and at lower levels in basal stems and leaf blades.

It is found in the endoplasmic reticulum membrane. In terms of biological role, multicopper oxidase that may play a role in the maintenance of inorganic phosphate homeostasis. This chain is Multicopper oxidase LPR1 homolog 1, found in Oryza sativa subsp. japonica (Rice).